A 277-amino-acid polypeptide reads, in one-letter code: Diaminopimelate epimerase (277 aa).

Residues asparagine 15 and asparagine 74 each contribute to the substrate site. Catalysis depends on cysteine 83, which acts as the Proton donor. Substrate-binding positions include 84–85 (GN), asparagine 159, asparagine 194, and 212–213 (ER). Cysteine 221 (proton acceptor) is an active-site residue. 222–223 (GT) is a substrate binding site.

It belongs to the diaminopimelate epimerase family. Homodimer.

The protein localises to the cytoplasm. The catalysed reaction is (2S,6S)-2,6-diaminopimelate = meso-2,6-diaminopimelate. It functions in the pathway amino-acid biosynthesis; L-lysine biosynthesis via DAP pathway; DL-2,6-diaminopimelate from LL-2,6-diaminopimelate: step 1/1. Its function is as follows. Catalyzes the stereoinversion of LL-2,6-diaminopimelate (L,L-DAP) to meso-diaminopimelate (meso-DAP), a precursor of L-lysine and an essential component of the bacterial peptidoglycan. The protein is Diaminopimelate epimerase of Corynebacterium glutamicum (strain R).